The following is a 308-amino-acid chain: Acetaldehyde dehydrogenase 2 (308 aa).

9–12 contacts NAD(+); sequence SGNI. Catalysis depends on cysteine 127, which acts as the Acyl-thioester intermediate. NAD(+) contacts are provided by residues 158 to 166 and asparagine 286; that span reads SAGPGTRAN.

This sequence belongs to the acetaldehyde dehydrogenase family.

It catalyses the reaction acetaldehyde + NAD(+) + CoA = acetyl-CoA + NADH + H(+). The sequence is that of Acetaldehyde dehydrogenase 2 from Parafrankia sp. (strain EAN1pec).